A 318-amino-acid polypeptide reads, in one-letter code: 2-keto-3-deoxygluconate permease (318 aa).

The next 10 membrane-spanning stretches (helical) occupy residues Leu10–Pro30, Gly42–Ile62, Ile82–Pro102, Leu109–Leu129, Ala139–Gly159, Leu163–Ala183, Phe194–Leu214, Ala224–Ala244, Val257–Ala277, and Ala289–Tyr309.

It belongs to the KdgT transporter family.

It is found in the cell inner membrane. The enzyme catalyses 2-dehydro-3-deoxy-D-gluconate(in) + H(+)(in) = 2-dehydro-3-deoxy-D-gluconate(out) + H(+)(out). In terms of biological role, catalyzes the proton-dependent uptake of 2-keto-3-deoxygluconate (KDG) into the cell. This is 2-keto-3-deoxygluconate permease from Xanthomonas euvesicatoria pv. vesicatoria (strain 85-10) (Xanthomonas campestris pv. vesicatoria).